The primary structure comprises 364 residues: D-alanine--D-alanine ligase (364 aa).

In terms of domain architecture, ATP-grasp spans 141 to 346 (KNLFAQAGLR…YSELIERLIA (206 aa)). 174–229 (EQELGYPCFVKPANAGSSVGISKCKQRDDLKTAFAEAFKYDRKIIIEESIVGREIE) contributes to the ATP binding site. Mg(2+) is bound by residues Asp-300, Glu-313, and Asn-315.

The protein belongs to the D-alanine--D-alanine ligase family. Mg(2+) serves as cofactor. Requires Mn(2+) as cofactor.

The protein localises to the cytoplasm. It catalyses the reaction 2 D-alanine + ATP = D-alanyl-D-alanine + ADP + phosphate + H(+). It functions in the pathway cell wall biogenesis; peptidoglycan biosynthesis. Its function is as follows. Cell wall formation. The sequence is that of D-alanine--D-alanine ligase from Geobacillus thermodenitrificans (strain NG80-2).